The chain runs to 287 residues: Uricase (287 aa).

Active-site charge relay system residues include Lys-11 and Thr-58. Thr-58, Asp-59, Phe-160, Arg-177, Val-219, Gln-220, and Asn-246 together coordinate urate. The active-site Charge relay system is the His-248. Positions 285-287 (SRL) match the Microbody targeting signal motif.

Belongs to the uricase family.

It localises to the peroxisome. It carries out the reaction urate + O2 + H2O = 5-hydroxyisourate + H2O2. The protein operates within purine metabolism; urate degradation; (S)-allantoin from urate: step 1/3. Catalyzes the oxidation of uric acid to 5-hydroxyisourate, which is further processed to form (S)-allantoin. The sequence is that of Uricase (uox) from Dictyostelium discoideum (Social amoeba).